A 121-amino-acid chain; its full sequence is Small ribosomal subunit protein uS13 (121 aa).

The interval 91–121 is disordered; it reads HRRGLPVRGQNTKNNARTRKGPSKTVAGKKK. The segment covering 106–121 has biased composition (basic residues); it reads ARTRKGPSKTVAGKKK.

Belongs to the universal ribosomal protein uS13 family. In terms of assembly, part of the 30S ribosomal subunit. Forms a loose heterodimer with protein S19. Forms two bridges to the 50S subunit in the 70S ribosome.

In terms of biological role, located at the top of the head of the 30S subunit, it contacts several helices of the 16S rRNA. In the 70S ribosome it contacts the 23S rRNA (bridge B1a) and protein L5 of the 50S subunit (bridge B1b), connecting the 2 subunits; these bridges are implicated in subunit movement. Contacts the tRNAs in the A and P-sites. This Listeria monocytogenes serotype 4b (strain CLIP80459) protein is Small ribosomal subunit protein uS13.